We begin with the raw amino-acid sequence, 407 residues long: SERPINE1 mRNA-binding protein 1 (407 aa).

Phosphoserine is present on Ser-25. The tract at residues Ala-33 to Val-227 is disordered. The span at Ala-51 to Lys-68 shows a compositional bias: low complexity. Lys-52 is subject to N6-acetyllysine; alternate. Lys-52 participates in a covalent cross-link: Glycyl lysine isopeptide (Lys-Gly) (interchain with G-Cter in SUMO1); alternate. Lys-68 is modified (N6-acetyllysine). 3 stretches are compositionally biased toward basic and acidic residues: residues Leu-70–Asn-80, Ala-89–Asp-114, and Lys-122–Ile-162. Lys-102 is covalently cross-linked (Glycyl lysine isopeptide (Lys-Gly) (interchain with G-Cter in SUMO2)). 2 positions are modified to N6-acetyllysine: Lys-122 and Lys-140. Residues Gly-164–Gly-182 show a composition bias toward gly residues. An omega-N-methylarginine mark is found at Arg-165 and Arg-188. A compositionally biased stretch (basic and acidic residues) spans Asp-183 to Ser-199. A phosphoserine mark is found at Ser-197, Ser-199, Ser-203, Ser-205, and Ser-208. Lys-211 bears the N6-acetyllysine; alternate mark. Lys-211 is covalently cross-linked (Glycyl lysine isopeptide (Lys-Gly) (interchain with G-Cter in SUMO2); alternate). The residue at position 216 (Arg-216) is an Omega-N-methylarginine. Ser-221 is modified (phosphoserine). Phosphothreonine is present on Thr-226. Lys-228 is covalently cross-linked (Glycyl lysine isopeptide (Lys-Gly) (interchain with G-Cter in SUMO1); alternate). Lys-228 is covalently cross-linked (Glycyl lysine isopeptide (Lys-Gly) (interchain with G-Cter in SUMO2); alternate). A phosphoserine mark is found at Leu-231, Ser-234, and Tyr-237. Ser-234 bears the Phosphothreonine mark. Lys-240 bears the Phosphothreonine mark. Residues Ile-242–Glu-256 show a composition bias toward polar residues. Disordered stretches follow at residues Ile-242–Thr-288 and Ser-327–Ala-407. Over residues Gly-261 to Asn-274 the composition is skewed to basic and acidic residues. A Glycyl lysine isopeptide (Lys-Gly) (interchain with G-Cter in SUMO2) cross-link involves residue Lys-280. Residues Ser-327 to His-341 are compositionally biased toward basic and acidic residues. N6-acetyllysine is present on Lys-328. Ser-329 is subject to Phosphoserine. Over residues Gly-362–Gly-371 the composition is skewed to gly residues. 3 positions are modified to omega-N-methylarginine: Arg-363, Arg-366, and Arg-369. Phosphoserine is present on residues Ser-391 and Ser-393.

It belongs to the SERBP1-HABP4 family. In terms of assembly, associates with mature 80S ribosomes. Interacts with EEF2/eEF2; interaction sequesters EEF2/eEF2 at the A-site of the ribosome, thereby blocking the interaction sites of the mRNA-tRNA complex, promoting ribosome stabilization and hibernation. Interacts with SPIN1. Interacts with CHD3 and TDRD3. Interacts with ZDHHC17 (via ANK repeats). Phosphorylation by MTOR inhibits SERBP1 and relieves ribosome hibernation.

The protein resides in the cytoplasm. It localises to the nucleus. It is found in the perinuclear region. Ribosome-binding protein that promotes ribosome hibernation, a process during which ribosomes are stabilized in an inactive state and preserved from proteasomal degradation. Acts via its association with EEF2/eEF2 factor, sequestering EEF2/eEF2 at the A-site of the ribosome and promoting ribosome stabilization and storage in an inactive state. May also play a role in the regulation of mRNA stability: binds to the 3'-most 134 nt of the SERPINE1/PAI1 mRNA, a region which confers cyclic nucleotide regulation of message decay. Seems to play a role in PML-nuclear bodies formation. The chain is SERPINE1 mRNA-binding protein 1 from Mus musculus (Mouse).